The sequence spans 874 residues: Leucine--tRNA ligase (874 aa).

A 'HIGH' region motif is present at residues 43 to 53 (PYPSGRIHIGH). The 'KMSKS' region motif lies at 630–634 (KMSKS). K633 contacts ATP.

This sequence belongs to the class-I aminoacyl-tRNA synthetase family.

It is found in the cytoplasm. It carries out the reaction tRNA(Leu) + L-leucine + ATP = L-leucyl-tRNA(Leu) + AMP + diphosphate. This Bradyrhizobium sp. (strain BTAi1 / ATCC BAA-1182) protein is Leucine--tRNA ligase.